The sequence spans 390 residues: Probable tRNA pseudouridine synthase D (390 aa).

D93 acts as the Nucleophile in catalysis. Residues 166–353 (YVLNYYGIQR…YGTRRKMITP (188 aa)) form the TRUD domain.

The protein belongs to the pseudouridine synthase TruD family.

It catalyses the reaction uridine(13) in tRNA = pseudouridine(13) in tRNA. Could be responsible for synthesis of pseudouridine from uracil-13 in transfer RNAs. In Methanococcus maripaludis (strain C5 / ATCC BAA-1333), this protein is Probable tRNA pseudouridine synthase D.